The sequence spans 398 residues: Yellow-related salivary protein SP04 (398 aa).

The signal sequence occupies residues 1 to 18 (MKWFLFLLSTIFVQGILG). Residues 73-94 (TLTEIERKKHPERSPPLSKFSG) are disordered. The segment covering 75–85 (TEIERKKHPER) has biased composition (basic and acidic residues).

This sequence belongs to the major royal jelly protein family. In terms of tissue distribution, female salivary gland (at protein level).

It localises to the secreted. Probably modulates blood feeding of sand flies on vertebrate species by binding and sequestering different mediators involved in the host response. Binds biogenic amines. Binds serotonin with high affinity. Binds histamine with low affinity. The chain is Yellow-related salivary protein SP04 from Phlebotomus argentipes (Phlebotomine sand fly).